Consider the following 249-residue polypeptide: Deoxyribose-phosphate aldolase (249 aa).

Catalysis depends on aspartate 109, which acts as the Proton donor/acceptor. Lysine 171 acts as the Schiff-base intermediate with acetaldehyde in catalysis. Lysine 200 serves as the catalytic Proton donor/acceptor.

It belongs to the DeoC/FbaB aldolase family. DeoC type 1 subfamily.

The protein resides in the cytoplasm. It carries out the reaction 2-deoxy-D-ribose 5-phosphate = D-glyceraldehyde 3-phosphate + acetaldehyde. It functions in the pathway carbohydrate degradation; 2-deoxy-D-ribose 1-phosphate degradation; D-glyceraldehyde 3-phosphate and acetaldehyde from 2-deoxy-alpha-D-ribose 1-phosphate: step 2/2. Its function is as follows. Catalyzes a reversible aldol reaction between acetaldehyde and D-glyceraldehyde 3-phosphate to generate 2-deoxy-D-ribose 5-phosphate. This Klebsiella pneumoniae subsp. pneumoniae (strain ATCC 700721 / MGH 78578) protein is Deoxyribose-phosphate aldolase.